The sequence spans 52 residues: Insulin (52 aa).

3 cysteine pairs are disulfide-bonded: Cys7/Cys38, Cys19/Cys51, and Cys37/Cys42.

Belongs to the insulin family. As to quaternary structure, heterodimer of a B chain and an A chain linked by two disulfide bonds.

It is found in the secreted. Insulin decreases blood glucose concentration. It increases cell permeability to monosaccharides, amino acids and fatty acids. It accelerates glycolysis, the pentose phosphate cycle, and glycogen synthesis in liver. This Amia calva (Bowfin) protein is Insulin (ins).